A 369-amino-acid chain; its full sequence is Ribonuclease D (369 aa).

Residues 4-168 enclose the 3'-5' exonuclease domain; sequence EIITTTAQLH…CLEKLQQQLE (165 aa). The region spanning 207 to 286 is the HRDC domain; it reads DRQGLAIIKA…TQVISQDEST (80 aa).

This sequence belongs to the RNase D family. It depends on a divalent metal cation as a cofactor.

The protein localises to the cytoplasm. It catalyses the reaction Exonucleolytic cleavage that removes extra residues from the 3'-terminus of tRNA to produce 5'-mononucleotides.. Its function is as follows. Exonuclease involved in the 3' processing of various precursor tRNAs. Initiates hydrolysis at the 3'-terminus of an RNA molecule and releases 5'-mononucleotides. The protein is Ribonuclease D of Psychromonas ingrahamii (strain DSM 17664 / CCUG 51855 / 37).